The following is a 364-amino-acid chain: UDP-N-acetylglucosamine--N-acetylmuramyl-(pentapeptide) pyrophosphoryl-undecaprenol N-acetylglucosamine transferase (364 aa).

UDP-N-acetyl-alpha-D-glucosamine-binding positions include 10–12 (TGG), N128, R170, S199, I250, and Q295.

Belongs to the glycosyltransferase 28 family. MurG subfamily.

It localises to the cell inner membrane. The catalysed reaction is di-trans,octa-cis-undecaprenyl diphospho-N-acetyl-alpha-D-muramoyl-L-alanyl-D-glutamyl-meso-2,6-diaminopimeloyl-D-alanyl-D-alanine + UDP-N-acetyl-alpha-D-glucosamine = di-trans,octa-cis-undecaprenyl diphospho-[N-acetyl-alpha-D-glucosaminyl-(1-&gt;4)]-N-acetyl-alpha-D-muramoyl-L-alanyl-D-glutamyl-meso-2,6-diaminopimeloyl-D-alanyl-D-alanine + UDP + H(+). It functions in the pathway cell wall biogenesis; peptidoglycan biosynthesis. Its function is as follows. Cell wall formation. Catalyzes the transfer of a GlcNAc subunit on undecaprenyl-pyrophosphoryl-MurNAc-pentapeptide (lipid intermediate I) to form undecaprenyl-pyrophosphoryl-MurNAc-(pentapeptide)GlcNAc (lipid intermediate II). The polypeptide is UDP-N-acetylglucosamine--N-acetylmuramyl-(pentapeptide) pyrophosphoryl-undecaprenol N-acetylglucosamine transferase (Chlorobaculum parvum (strain DSM 263 / NCIMB 8327) (Chlorobium vibrioforme subsp. thiosulfatophilum)).